A 1254-amino-acid polypeptide reads, in one-letter code: AF4/FMR2 family member 3 (1254 aa).

Positions 45–62 (YEPDRNALRRKERERRSQ) are enriched in basic and acidic residues. 5 disordered regions span residues 45 to 90 (YEPD…GDEL), 139 to 190 (AESR…AAQQ), 261 to 324 (RPMD…GENN), 350 to 534 (EPSK…EGQD), and 552 to 752 (KTTC…SVGS). 2 stretches are compositionally biased toward polar residues: residues 67 to 76 (DSGSFNSGYS) and 143 to 158 (AQPQ…SSTP). Residues 359–369 (KDSQLVSSGHS) are compositionally biased toward polar residues. The segment covering 406 to 418 (QQAAQRTALRALA) has biased composition (low complexity). A compositionally biased stretch (polar residues) spans 421 to 433 (SVVQQTNCRGSAP). Residues 441–472 (SSSSGGSSSSSDSESTSGSDSETESSSSSSES) are compositionally biased toward low complexity. Residues 552-561 (KTTCKEEQRP) show a composition bias toward basic and acidic residues. Over residues 577 to 605 (SPPAAVAVTAAALPPAVPSAPTESAPAPT) the composition is skewed to low complexity. Positions 615-633 (RRTERTSAGDGANCHRPEE) are enriched in basic and acidic residues. 2 stretches are compositionally biased toward low complexity: residues 694-704 (TESSSSSSSSD) and 732-749 (AASS…SRAS). Ser-782 bears the Phosphoserine mark. Residues 813 to 883 (PGVLSAPSAK…ASTNNTLSGN (71 aa)) form a disordered region. The segment covering 857–869 (REIKKVQGRKESA) has biased composition (basic and acidic residues). Residues 873–883 (AASTNNTLSGN) show a composition bias toward polar residues. Phosphoserine is present on Ser-908. Disordered regions lie at residues 919-991 (ASED…HRDC) and 1128-1171 (AAQA…SGLS). 2 stretches are compositionally biased toward polar residues: residues 922–941 (DLTS…ASSN) and 960–985 (ASHN…SPGS). Low complexity-rich tracts occupy residues 1132-1146 (PSPW…GSPS) and 1154-1171 (PASS…SGLS).

This sequence belongs to the AF4 family. Highest levels found in lymphoid tissues, lower levels in brain and lung.

It is found in the nucleus. Putative transcription activator that may function in lymphoid development and oncogenesis. This is AF4/FMR2 family member 3 (Aff3) from Mus musculus (Mouse).